A 117-amino-acid chain; its full sequence is Large ribosomal subunit protein bL19 (117 aa).

The protein belongs to the bacterial ribosomal protein bL19 family.

This protein is located at the 30S-50S ribosomal subunit interface and may play a role in the structure and function of the aminoacyl-tRNA binding site. This is Large ribosomal subunit protein bL19 from Paenarthrobacter aurescens (strain TC1).